Consider the following 382-residue polypeptide: Putative oxidoreductase C1F5.03c (382 aa).

A helical membrane pass occupies residues 7 to 27 (IVIVGGGITGVSCLYFLAHHP).

It belongs to the TDA3 family.

The protein resides in the cytoplasm. It localises to the membrane. Its function is as follows. Putative oxidoreductase that negatively regulates the retrieval of cargo from late endosomes to the Golgi. This chain is Putative oxidoreductase C1F5.03c, found in Schizosaccharomyces pombe (strain 972 / ATCC 24843) (Fission yeast).